A 213-amino-acid chain; its full sequence is Uracil phosphoribosyltransferase (213 aa).

5-phospho-alpha-D-ribose 1-diphosphate-binding positions include Arg-78, Arg-103, and 130–138 (DPMLATGGS). Uracil-binding positions include Ile-197 and 202-204 (GDA). Position 203 (Asp-203) interacts with 5-phospho-alpha-D-ribose 1-diphosphate.

The protein belongs to the UPRTase family. It depends on Mg(2+) as a cofactor.

The enzyme catalyses UMP + diphosphate = 5-phospho-alpha-D-ribose 1-diphosphate + uracil. It functions in the pathway pyrimidine metabolism; UMP biosynthesis via salvage pathway; UMP from uracil: step 1/1. Allosterically activated by GTP. In terms of biological role, catalyzes the conversion of uracil and 5-phospho-alpha-D-ribose 1-diphosphate (PRPP) to UMP and diphosphate. The sequence is that of Uracil phosphoribosyltransferase from Cutibacterium acnes (strain DSM 16379 / KPA171202) (Propionibacterium acnes).